The sequence spans 100 residues: MRLTPHEQDRLLISYAAELARRRRARGLRLNHPEAVAVITDHLLEGARDGRTVAELMVSGRSVLTRDDVMDGVPEMLHDVQVEATFPDGTKLVTVHQPIA.

The protein belongs to the urease gamma subunit family. As to quaternary structure, heterotrimer of UreA (gamma), UreB (beta) and UreC (alpha) subunits. Three heterotrimers associate to form the active enzyme.

It localises to the cytoplasm. The enzyme catalyses urea + 2 H2O + H(+) = hydrogencarbonate + 2 NH4(+). The protein operates within nitrogen metabolism; urea degradation; CO(2) and NH(3) from urea (urease route): step 1/1. The chain is Urease subunit gamma from Mycolicibacterium smegmatis (strain ATCC 700084 / mc(2)155) (Mycobacterium smegmatis).